Here is a 528-residue protein sequence, read N- to C-terminus: MPVTMSRAFLDNFLGNSPKWFKIAIISFLVINPIVFYFNPFVAGWLLVVEFIFTLAMALKCYPLQPGGLLAIEAVAIGMTSPSQVLHEIEANLEVVLLLVFMVAGIYFMKQLLLFVFTKMITKVRSKIYVSLLFCISSAFLSAFLDALTVIAVIITVAVGFYSIYHKVASGKTFGESHDHTSDGYPQLCEEELESFRGFLRNLLMHAGVGTALGGVCTMVGEPQNLIIAAQANWQFAEFAIRMSPVTVPVFFAGITTCFLVEKFKVFGYGQQLPDAVHKILSDYDAHEDANRTKHDKVKLLIQAVIGVWLIAGLALHLASVGLIGLSVIILATAFNGITNEHALGKAFEEALPFTALLAVFFAIVAVIIDQQLFAPVIQWALSYEGNTQLVIFYIANGLLSMVSDNVFVGTVYINEVKSALLNGQITRDQFDLLAVAINTGTNLPSVATPNGQAAFLFLLTSAIAPLIRLSYGRMVWMALPYTIVLSIVGVLAIQLGALEQMTQYFYDSQMLIHHSAQAAADGVVSSH.

A run of 10 helical transmembrane segments spans residues tryptophan 20–asparagine 39, proline 66–leucine 86, leucine 97–phenylalanine 117, alanine 139–valine 159, isoleucine 241–valine 261, alanine 304–isoleucine 324, glutamate 349–isoleucine 369, leucine 390–glycine 410, alanine 448–isoleucine 468, and valine 476–leucine 496.

It belongs to the NhaB Na(+)/H(+) (TC 2.A.34) antiporter family.

It localises to the cell inner membrane. The catalysed reaction is 2 Na(+)(in) + 3 H(+)(out) = 2 Na(+)(out) + 3 H(+)(in). Functionally, na(+)/H(+) antiporter that extrudes sodium in exchange for external protons. The chain is Na(+)/H(+) antiporter NhaB from Shewanella pealeana (strain ATCC 700345 / ANG-SQ1).